Here is a 201-residue protein sequence, read N- to C-terminus: Large ribosomal subunit protein bL25 (201 aa).

The protein belongs to the bacterial ribosomal protein bL25 family. CTC subfamily. Part of the 50S ribosomal subunit; part of the 5S rRNA/L5/L18/L25 subcomplex. Contacts the 5S rRNA. Binds to the 5S rRNA independently of L5 and L18.

This is one of the proteins that binds to the 5S RNA in the ribosome where it forms part of the central protuberance. The sequence is that of Large ribosomal subunit protein bL25 from Chlorobaculum parvum (strain DSM 263 / NCIMB 8327) (Chlorobium vibrioforme subsp. thiosulfatophilum).